The sequence spans 72 residues: Alpha-elapitoxin-Dpp2a (72 aa).

Disulfide bonds link Cys3/Cys21, Cys14/Cys42, Cys27/Cys31, Cys46/Cys57, and Cys58/Cys63.

Belongs to the three-finger toxin family. Long-chain subfamily. Type II alpha-neurotoxin sub-subfamily. As to expression, expressed by the venom gland.

Its subcellular location is the secreted. Binds with high affinity to muscular (alpha-1/CHRNA1) and neuronal (alpha-7/CHRNA7) nicotinic acetylcholine receptor (nAChR) and inhibits acetylcholine from binding to the receptor, thereby impairing neuromuscular and neuronal transmission. In Dendroaspis polylepis polylepis (Black mamba), this protein is Alpha-elapitoxin-Dpp2a.